The sequence spans 299 residues: Pyridoxal 5'-phosphate synthase subunit PdxS (299 aa).

Residue Asp-24 participates in D-ribose 5-phosphate binding. Lys-81 acts as the Schiff-base intermediate with D-ribose 5-phosphate in catalysis. A D-ribose 5-phosphate-binding site is contributed by Gly-153. Arg-165 is a binding site for D-glyceraldehyde 3-phosphate. Residues Gly-219 and 240–241 (GS) contribute to the D-ribose 5-phosphate site.

Belongs to the PdxS/SNZ family. As to quaternary structure, in the presence of PdxT, forms a dodecamer of heterodimers.

It catalyses the reaction aldehydo-D-ribose 5-phosphate + D-glyceraldehyde 3-phosphate + L-glutamine = pyridoxal 5'-phosphate + L-glutamate + phosphate + 3 H2O + H(+). The protein operates within cofactor biosynthesis; pyridoxal 5'-phosphate biosynthesis. Its function is as follows. Catalyzes the formation of pyridoxal 5'-phosphate from ribose 5-phosphate (RBP), glyceraldehyde 3-phosphate (G3P) and ammonia. The ammonia is provided by the PdxT subunit. Can also use ribulose 5-phosphate and dihydroxyacetone phosphate as substrates, resulting from enzyme-catalyzed isomerization of RBP and G3P, respectively. This Methanococcus maripaludis (strain DSM 14266 / JCM 13030 / NBRC 101832 / S2 / LL) protein is Pyridoxal 5'-phosphate synthase subunit PdxS.